We begin with the raw amino-acid sequence, 182 residues long: Large ribosomal subunit protein uL16 (182 aa).

The segment at 140 to 182 is disordered; the sequence is EKPTQVGKAPPKSSFLPSDETETAAAQAGTEASSASSVTPLES. Residues 162–176 show a composition bias toward low complexity; that stretch reads TAAAQAGTEASSASS.

The protein belongs to the universal ribosomal protein uL16 family. As to quaternary structure, part of the 50S ribosomal subunit.

In terms of biological role, binds 23S rRNA and is also seen to make contacts with the A and possibly P site tRNAs. This Prochlorococcus marinus (strain SARG / CCMP1375 / SS120) protein is Large ribosomal subunit protein uL16.